A 454-amino-acid polypeptide reads, in one-letter code: Bifunctional protein GlmU (454 aa).

The pyrophosphorylase stretch occupies residues 1–226 (MALNVVILAA…AIEVEGANNR (226 aa)). Residues 8–11 (LAAG), K22, Q73, 78–79 (GT), 100–102 (YGD), G137, E151, N166, and N224 each bind UDP-N-acetyl-alpha-D-glucosamine. Mg(2+) is bound at residue D102. N224 provides a ligand contact to Mg(2+). A linker region spans residues 227–247 (VQLAQLERAYQAREAEKLMIA). Residues 248-454 (GANLRDPSRI…GWQRPVKIKK (207 aa)) are N-acetyltransferase. UDP-N-acetyl-alpha-D-glucosamine-binding residues include R330 and K348. H360 functions as the Proton acceptor in the catalytic mechanism. Residues Y363 and N374 each coordinate UDP-N-acetyl-alpha-D-glucosamine. Residues A377, 383–384 (NY), S402, A420, and R437 each bind acetyl-CoA.

In the N-terminal section; belongs to the N-acetylglucosamine-1-phosphate uridyltransferase family. It in the C-terminal section; belongs to the transferase hexapeptide repeat family. Homotrimer. Requires Mg(2+) as cofactor.

The protein resides in the cytoplasm. The catalysed reaction is alpha-D-glucosamine 1-phosphate + acetyl-CoA = N-acetyl-alpha-D-glucosamine 1-phosphate + CoA + H(+). The enzyme catalyses N-acetyl-alpha-D-glucosamine 1-phosphate + UTP + H(+) = UDP-N-acetyl-alpha-D-glucosamine + diphosphate. Its pathway is nucleotide-sugar biosynthesis; UDP-N-acetyl-alpha-D-glucosamine biosynthesis; N-acetyl-alpha-D-glucosamine 1-phosphate from alpha-D-glucosamine 6-phosphate (route II): step 2/2. It functions in the pathway nucleotide-sugar biosynthesis; UDP-N-acetyl-alpha-D-glucosamine biosynthesis; UDP-N-acetyl-alpha-D-glucosamine from N-acetyl-alpha-D-glucosamine 1-phosphate: step 1/1. It participates in bacterial outer membrane biogenesis; LPS lipid A biosynthesis. Its function is as follows. Catalyzes the last two sequential reactions in the de novo biosynthetic pathway for UDP-N-acetylglucosamine (UDP-GlcNAc). The C-terminal domain catalyzes the transfer of acetyl group from acetyl coenzyme A to glucosamine-1-phosphate (GlcN-1-P) to produce N-acetylglucosamine-1-phosphate (GlcNAc-1-P), which is converted into UDP-GlcNAc by the transfer of uridine 5-monophosphate (from uridine 5-triphosphate), a reaction catalyzed by the N-terminal domain. The sequence is that of Bifunctional protein GlmU from Shewanella sp. (strain ANA-3).